We begin with the raw amino-acid sequence, 2273 residues long: Retinal-specific phospholipid-transporting ATPase ABCA4 (2273 aa).

Residues 1-21 (MGFVRQIQLLLWKNWTLRKRQ) lie on the Cytoplasmic side of the membrane. The chain crosses the membrane as a helical span at residues 22–42 (KIRFVVELVWPLSLFLVLIWL). The Extracellular segment spans residues 43-646 (RNANPLYSHH…MPYPCFVDDS (604 aa)). Intrachain disulfides connect Cys54–Cys81 and Cys75–Cys324. An N-linked (GlcNAc...) asparagine glycan is attached at Asn98. Positions 336 and 338 each coordinate Mg(2+). Cys370 and Cys519 are oxidised to a cystine. 3 N-linked (GlcNAc...) asparagine glycosylation sites follow: Asn415, Asn444, and Asn504. Residues Arg587 and Arg653 each coordinate an N-all-trans-retinylidenephosphatidylethanolamine. Intrachain disulfides connect Cys641–Cys1490, Cys1444–Cys1455, and Cys1488–Cys1502. The chain crosses the membrane as a helical span at residues 647–667 (FMIILNRCFPIFMVLAWIYSV). Residues 668-699 (SMTVKSIVLEKELRLKETLKNQGVSNAVIWCT) are Cytoplasmic-facing. A helical transmembrane segment spans residues 700–720 (WFLDSFSIMSMSIFLLTIFIM). Over 721 to 730 (HGRILHYSDP) the chain is Extracellular. Residues 731–751 (FILFLFLLAFSTATIMLCFLL) form a helical membrane-spanning segment. The Cytoplasmic portion of the chain corresponds to 752–759 (STFFSKAS). A helical transmembrane segment spans residues 760-780 (LAAACSGVIYFTLYLPHILCF). Topologically, residues 781–835 (AWQDRMTAELKKAVSLLSPVAFGFGTEYLVRFEEQGLGLQWSNIGNSPTEGDEFS) are extracellular. Residues 836-856 (FLLSMQMMLLDAAVYGLLAWY) form a helical membrane-spanning segment. Residues 857 to 1376 (LDQVFPGDYG…IRSHKDFLAQ (520 aa)) are Cytoplasmic-facing. The interval 891–911 (ERALEKTEPLTEETEDPEHPE) is disordered. Thr901 is modified (phosphothreonine). The 232-residue stretch at 929 to 1160 (VCVKNLVKIF…FGTGLYLTLV (232 aa)) folds into the ABC transporter 1 domain. ATP contacts are provided by Phe938, Gly966, and Lys969. Thr970 provides a ligand contact to Mg(2+). ATP-binding residues include Thr971, Gln1010, Lys1054, Gly1064, Gly1065, and His1118. Ser1185 carries the phosphoserine modification. Residues 1284 to 1345 (PLFAGGAQQK…EPECPGPQLN (62 aa)) are disordered. Thr1313 is modified (phosphothreonine). Ser1317 carries the phosphoserine modification. Residues 1331–1340 (GQPPPEPECP) are compositionally biased toward pro residues. A helical transmembrane segment spans residues 1377 to 1397 (IVLPATFVFLALMLSIVIPPF). The Extracellular portion of the chain corresponds to 1398–1727 (GEYPALTLHP…VSPTTYWVTN (330 aa)). Asn1469 carries an N-linked (GlcNAc...) asparagine glycan. 3 N-linked (GlcNAc...) asparagine glycosylation sites follow: Asn1529, Asn1588, and Asn1662. A helical membrane pass occupies residues 1728–1748 (FLWDIMNYSVSAGLVVGIFIG). The Cytoplasmic segment spans residues 1749 to 1759 (FQKKAYTSPEN). A helical transmembrane segment spans residues 1760–1780 (LPALVALLLLYGWAVIPMMYP). Over 1781–1792 (ASFLFDVPSTAY) the chain is Extracellular. Residues 1793–1813 (VALSCANLFIGINSSAITFIL) traverse the membrane as a helical segment. Over 1814 to 1831 (ELFENNRTLLRFNAVLRK) the chain is Cytoplasmic. Residues 1832–1852 (LLIVFPHFCLGRGLIDLALSQ) form a helical membrane-spanning segment. Topologically, residues 1853–1873 (AVTDVYARFGEEHSANPFHWD) are extracellular. A helical transmembrane segment spans residues 1874 to 1894 (LIGKNLFAMVVEGVVYFLLTL). Residues 1895–2273 (LVQRHFFLSQ…AAGASRQAQD (379 aa)) are Cytoplasmic-facing. Positions 1938-2170 (LRLHELTKIY…FGDGYIVTMK (233 aa)) constitute an ABC transporter 2 domain. 6 residues coordinate ATP: Asn1974, Gly1975, Lys1978, Thr1979, Thr1980, and Gly2073. Thr1979 is a binding site for Mg(2+). The interval 2244–2249 (VFVNFA) is essential for ATP binding and ATPase activity.

Belongs to the ABC transporter superfamily. ABCA family. Post-translationally, proteolytic cleavage by trypsin leads to a 120-kDa N-terminal fragment and a 115-kDa C-terminal fragment that are linked through disulfide bonds. N-glycosylated. In terms of processing, phosphorylation is independent of light exposure and modulates ATPase activity. As to expression, retinal-specific. Seems to be exclusively found in the rims of rod photoreceptor cells.

Its subcellular location is the membrane. The protein localises to the endoplasmic reticulum. It is found in the cytoplasmic vesicle. The protein resides in the cell projection. It localises to the cilium. Its subcellular location is the photoreceptor outer segment. The enzyme catalyses an N-all-trans-retinylidenephosphatidylethanolamine(out) + ATP + H2O = an N-all-trans-retinylidenephosphatidylethanolamine(in) + ADP + phosphate + H(+). It catalyses the reaction ATP + H2O + phospholipidSide 1 = ADP + phosphate + phospholipidSide 2.. The catalysed reaction is a 1,2-diacyl-sn-glycero-3-phosphoethanolamine(out) + ATP + H2O = a 1,2-diacyl-sn-glycero-3-phosphoethanolamine(in) + ADP + phosphate + H(+). It carries out the reaction N-11-cis-retinylidenephosphatidylethanolamine(out) + ATP + H2O = N-11-cis-retinylidenephosphatidylethanolamine(in) + ADP + phosphate + H(+). The enzyme catalyses ATP + H2O = ADP + phosphate + H(+). Its activity is regulated as follows. ATPase activity is decreased by cholesterol and ceramide. Phospholipids translocase activity is highly reduced by berylium fluoride and aluminum floride. N-ethylmaleimide inhibits phospholipid translocase activity. In terms of biological role, flippase that catalyzes in an ATP-dependent manner the transport of retinal-phosphatidylethanolamine conjugates like 11-cis and all-trans isomers of N-retinylidene-phosphatidylethanolamine (N-Ret-PE) from the lumen to the cytoplasmic leaflet of photoreceptor outer segment disk membranes, where 11-cis-retinylidene-phosphatidylethanolamine is then isomerized to its all-trans isomer and reduced by RDH8 to produce all-trans-retinol. This transport activity ensures that all-trans-retinal generated from photoexcitation and 11-cis-retinal not needed for the regeneration of rhodopsin and cone opsins are effectively cleared from the photoreceptors, therefore preventing their accumulation and the formation of toxic bisretinoid. Displays ATPase activity in vitro in absence of retinal substrate. May display GTPase activity that is strongly influenced by the lipid environment and the presence of retinoid compounds. Binds the unprotonated form of N-retinylidene-phosphatidylethanolamine with high affinity in the absence of ATP, and ATP binding and hydrolysis induce a protein conformational change that causes N-retinylidene-phosphatidylethanolamine release. This is Retinal-specific phospholipid-transporting ATPase ABCA4 from Homo sapiens (Human).